The chain runs to 525 residues: BTB/POZ domain-containing protein 2 (525 aa).

A disordered region spans residues 1 to 86 (MAAGGSGGRA…AEEAAGPGAA (86 aa)). Residues 16-26 (VGVGPGTGGSP) are compositionally biased toward gly residues. Residues 27 to 55 (GPSANAAATPAPGNAAAAAAAAAAAAAAP) show a composition bias toward low complexity. The span at 56–65 (GPTPPAPPGP) shows a compositional bias: pro residues. A compositionally biased stretch (low complexity) spans 66–86 (GTDAQAAGAERAEEAAGPGAA). Positions 117–187 (CDVHFLVGKG…LYSDEVQIGP (71 aa)) constitute a BTB domain.

As to quaternary structure, interacts with topoisomerase 1 and with TRIM5 isoform Delta.

Its subcellular location is the cytoplasm. The chain is BTB/POZ domain-containing protein 2 (BTBD2) from Homo sapiens (Human).